The primary structure comprises 415 residues: Gamma-glutamyl phosphate reductase (415 aa).

Belongs to the gamma-glutamyl phosphate reductase family.

It is found in the cytoplasm. The enzyme catalyses L-glutamate 5-semialdehyde + phosphate + NADP(+) = L-glutamyl 5-phosphate + NADPH + H(+). The protein operates within amino-acid biosynthesis; L-proline biosynthesis; L-glutamate 5-semialdehyde from L-glutamate: step 2/2. Functionally, catalyzes the NADPH-dependent reduction of L-glutamate 5-phosphate into L-glutamate 5-semialdehyde and phosphate. The product spontaneously undergoes cyclization to form 1-pyrroline-5-carboxylate. This chain is Gamma-glutamyl phosphate reductase, found in Desulforamulus reducens (strain ATCC BAA-1160 / DSM 100696 / MI-1) (Desulfotomaculum reducens).